The primary structure comprises 181 residues: Macro domain-containing protein in sno 5'region (181 aa).

The region spanning 1–172 is the Macro domain; that stretch reads MTTITLVQGD…TFARELGDAG (172 aa).

This sequence belongs to the MacroD-type family.

This is Macro domain-containing protein in sno 5'region from Streptomyces nogalater.